The primary structure comprises 63 residues: High-potential iron-sulfur protein (63 aa).

Residues Cys-23, Cys-26, Cys-41, and Cys-56 each contribute to the [4Fe-4S] cluster site.

This sequence belongs to the high-potential iron-sulfur protein (HiPIP) family. As to quaternary structure, homodimer.

Functionally, specific class of high-redox-potential 4Fe-4S ferredoxins. Functions in anaerobic electron transport in most purple and in some other photosynthetic bacteria and in at least one genus (Paracoccus) of halophilic, denitrifying bacteria. This Rhodocyclus tenuis (Rhodospirillum tenue) protein is High-potential iron-sulfur protein (hip).